Reading from the N-terminus, the 236-residue chain is MKFFIFTCLLAVALAKHNMEHRSSSEDSVNISQEKFKQEKYVVIPTSKESICSTSCEEATRNINEMESAKFPTEVYSSSSSSEESAKFPTEREEKEVEEKHHLKQLNKINQFYEKLNFLQYLQALRQPRIVLTPWDQTKTGASPFIPIVNTEQLFTSEEIPKKTVDMESTEVVTEKTELTEEEKNYLKLLNKINQYYEKFTLPQYFKIVHQHQTTMDPQSHSKTNSYQIIPVLRYF.

Residues 1 to 15 form the signal peptide; the sequence is MKFFIFTCLLAVALA. Phosphoserine is present on residues Ser23, Ser24, Ser25, Ser28, Ser47, Ser80, Ser81, Ser82, Ser85, Ser157, and Ser169. The interval 72 to 93 is disordered; it reads PTEVYSSSSSSEESAKFPTERE. Positions 84–93 are enriched in basic and acidic residues; the sequence is ESAKFPTERE.

This sequence belongs to the alpha-casein family. Post-translationally, there are at least three different forms found in milk, with varying degrees of phosphorylation. These include form 10-P which is phosphorylated at ten sites that have not been determined, form 11-P which is phosphorylated at eleven sites and form 12-P which is phosphorylated at twelve sites. As to expression, mammary gland specific. Secreted in milk.

It localises to the secreted. Functionally, important role in the capacity of milk to transport calcium phosphate. In Equus asinus (Donkey), this protein is Alpha-S2-casein.